The chain runs to 169 residues: Protein-export protein SecB (169 aa).

Belongs to the SecB family. Homotetramer, a dimer of dimers. One homotetramer interacts with 1 SecA dimer.

It is found in the cytoplasm. One of the proteins required for the normal export of preproteins out of the cell cytoplasm. It is a molecular chaperone that binds to a subset of precursor proteins, maintaining them in a translocation-competent state. It also specifically binds to its receptor SecA. The sequence is that of Protein-export protein SecB from Mannheimia succiniciproducens (strain KCTC 0769BP / MBEL55E).